The following is a 439-amino-acid chain: ATP-dependent RNA helicase SUB2 (439 aa).

The span at 1–19 (MSHEGEEDLLEYSDNEQEI) shows a compositional bias: acidic residues. The segment at 1–48 (MSHEGEEDLLEYSDNEQEIQVDNKETAVEGTTENEATQENGEADKKGS) is disordered. Positions 29–40 (EGTTENEATQEN) are enriched in polar residues. The Q motif motif lies at 55-83 (TGFKDFLLKPELSRAIIDCGFEHPSEVQQ). In terms of domain architecture, Helicase ATP-binding spans 86–261 (IPQSIHGTDV…RRFLQNPLEI (176 aa)). 99 to 106 (AKSGLGKT) provides a ligand contact to ATP. Positions 208–211 (DECD) match the DECD box motif. In terms of domain architecture, Helicase C-terminal spans 273-434 (GLQQYYIKLE…EFPEEGIDPS (162 aa)).

This sequence belongs to the DEAD box helicase family. DECD subfamily.

Its subcellular location is the nucleus. The enzyme catalyses ATP + H2O = ADP + phosphate + H(+). ATP-binding RNA helicase involved in transcription elongation and required for the export of mRNA out of the nucleus. SUB2 also plays a role in pre-mRNA splicing and spliceosome assembly. May be involved in rDNA and telomeric silencing, and maintenance of genome integrity. This Candida glabrata (strain ATCC 2001 / BCRC 20586 / JCM 3761 / NBRC 0622 / NRRL Y-65 / CBS 138) (Yeast) protein is ATP-dependent RNA helicase SUB2 (SUB2).